A 462-amino-acid polypeptide reads, in one-letter code: ATP synthase subunit beta (462 aa).

Position 152–159 (152–159 (GGAGVGKT)) interacts with ATP.

It belongs to the ATPase alpha/beta chains family. As to quaternary structure, F-type ATPases have 2 components, CF(1) - the catalytic core - and CF(0) - the membrane proton channel. CF(1) has five subunits: alpha(3), beta(3), gamma(1), delta(1), epsilon(1). CF(0) has three main subunits: a(1), b(2) and c(9-12). The alpha and beta chains form an alternating ring which encloses part of the gamma chain. CF(1) is attached to CF(0) by a central stalk formed by the gamma and epsilon chains, while a peripheral stalk is formed by the delta and b chains.

It is found in the cell inner membrane. The enzyme catalyses ATP + H2O + 4 H(+)(in) = ADP + phosphate + 5 H(+)(out). Produces ATP from ADP in the presence of a proton gradient across the membrane. The catalytic sites are hosted primarily by the beta subunits. The protein is ATP synthase subunit beta of Blochmanniella pennsylvanica (strain BPEN).